The chain runs to 173 residues: Large ribosomal subunit protein uL10 (173 aa).

The protein belongs to the universal ribosomal protein uL10 family. Part of the ribosomal stalk of the 50S ribosomal subunit. The N-terminus interacts with L11 and the large rRNA to form the base of the stalk. The C-terminus forms an elongated spine to which L12 dimers bind in a sequential fashion forming a multimeric L10(L12)X complex.

Its function is as follows. Forms part of the ribosomal stalk, playing a central role in the interaction of the ribosome with GTP-bound translation factors. This is Large ribosomal subunit protein uL10 from Cupriavidus pinatubonensis (strain JMP 134 / LMG 1197) (Cupriavidus necator (strain JMP 134)).